A 209-amino-acid chain; its full sequence is Large ribosomal subunit protein uL3 (209 aa).

A disordered region spans residues 132–153 (ATHGNSLSHRVPGSIGQNQTPG). Gln-150 is subject to N5-methylglutamine.

Belongs to the universal ribosomal protein uL3 family. Part of the 50S ribosomal subunit. Forms a cluster with proteins L14 and L19. In terms of processing, methylated by PrmB.

In terms of biological role, one of the primary rRNA binding proteins, it binds directly near the 3'-end of the 23S rRNA, where it nucleates assembly of the 50S subunit. The sequence is that of Large ribosomal subunit protein uL3 from Erwinia tasmaniensis (strain DSM 17950 / CFBP 7177 / CIP 109463 / NCPPB 4357 / Et1/99).